The sequence spans 292 residues: Phosphatidylserine decarboxylase proenzyme (292 aa).

Residues Asp89, His146, and Ser252 each act as charge relay system; for autoendoproteolytic cleavage activity in the active site. Ser252 serves as the catalytic Schiff-base intermediate with substrate; via pyruvic acid; for decarboxylase activity. Ser252 carries the pyruvic acid (Ser); by autocatalysis modification.

It belongs to the phosphatidylserine decarboxylase family. PSD-B subfamily. Prokaryotic type I sub-subfamily. As to quaternary structure, heterodimer of a large membrane-associated beta subunit and a small pyruvoyl-containing alpha subunit. Requires pyruvate as cofactor. In terms of processing, is synthesized initially as an inactive proenzyme. Formation of the active enzyme involves a self-maturation process in which the active site pyruvoyl group is generated from an internal serine residue via an autocatalytic post-translational modification. Two non-identical subunits are generated from the proenzyme in this reaction, and the pyruvate is formed at the N-terminus of the alpha chain, which is derived from the carboxyl end of the proenzyme. The autoendoproteolytic cleavage occurs by a canonical serine protease mechanism, in which the side chain hydroxyl group of the serine supplies its oxygen atom to form the C-terminus of the beta chain, while the remainder of the serine residue undergoes an oxidative deamination to produce ammonia and the pyruvoyl prosthetic group on the alpha chain. During this reaction, the Ser that is part of the protease active site of the proenzyme becomes the pyruvoyl prosthetic group, which constitutes an essential element of the active site of the mature decarboxylase.

The protein resides in the cell membrane. It catalyses the reaction a 1,2-diacyl-sn-glycero-3-phospho-L-serine + H(+) = a 1,2-diacyl-sn-glycero-3-phosphoethanolamine + CO2. Its pathway is phospholipid metabolism; phosphatidylethanolamine biosynthesis; phosphatidylethanolamine from CDP-diacylglycerol: step 2/2. Its function is as follows. Catalyzes the formation of phosphatidylethanolamine (PtdEtn) from phosphatidylserine (PtdSer). The polypeptide is Phosphatidylserine decarboxylase proenzyme (Shewanella baltica (strain OS223)).